Consider the following 522-residue polypeptide: Glucose-1-phosphate adenylyltransferase large subunit 1, chloroplastic (522 aa).

Residues methionine 1 to arginine 54 constitute a chloroplast transit peptide. Serine 428 carries the phosphoserine modification.

The protein belongs to the bacterial/plant glucose-1-phosphate adenylyltransferase family. As to quaternary structure, heterotetramer. As to expression, leaves.

The protein resides in the plastid. Its subcellular location is the chloroplast. It catalyses the reaction alpha-D-glucose 1-phosphate + ATP + H(+) = ADP-alpha-D-glucose + diphosphate. It participates in glycan biosynthesis; starch biosynthesis. Its activity is regulated as follows. Activated by 3'phosphoglycerate, inhibited by orthophosphate. Allosteric regulation. Functionally, this protein plays a role in synthesis of starch. It catalyzes the synthesis of the activated glycosyl donor, ADP-glucose from Glc-1-P and ATP. This chain is Glucose-1-phosphate adenylyltransferase large subunit 1, chloroplastic (ADG2), found in Arabidopsis thaliana (Mouse-ear cress).